A 290-amino-acid chain; its full sequence is Acetyl-coenzyme A carboxylase carboxyl transferase subunit beta (290 aa).

One can recognise a CoA carboxyltransferase N-terminal domain in the interval 27-290 (LWVKCPSCEA…LQRQPADALA (264 aa)). Cys31, Cys34, Cys50, and Cys53 together coordinate Zn(2+). The C4-type zinc finger occupies 31-53 (CPSCEAVLYRNDVDANLHVCPKC).

Belongs to the AccD/PCCB family. Acetyl-CoA carboxylase is a heterohexamer composed of biotin carboxyl carrier protein (AccB), biotin carboxylase (AccC) and two subunits each of ACCase subunit alpha (AccA) and ACCase subunit beta (AccD). Zn(2+) serves as cofactor.

The protein localises to the cytoplasm. The enzyme catalyses N(6)-carboxybiotinyl-L-lysyl-[protein] + acetyl-CoA = N(6)-biotinyl-L-lysyl-[protein] + malonyl-CoA. Its pathway is lipid metabolism; malonyl-CoA biosynthesis; malonyl-CoA from acetyl-CoA: step 1/1. Functionally, component of the acetyl coenzyme A carboxylase (ACC) complex. Biotin carboxylase (BC) catalyzes the carboxylation of biotin on its carrier protein (BCCP) and then the CO(2) group is transferred by the transcarboxylase to acetyl-CoA to form malonyl-CoA. This is Acetyl-coenzyme A carboxylase carboxyl transferase subunit beta from Burkholderia cenocepacia (strain ATCC BAA-245 / DSM 16553 / LMG 16656 / NCTC 13227 / J2315 / CF5610) (Burkholderia cepacia (strain J2315)).